A 337-amino-acid chain; its full sequence is Trace amine-associated receptor 5 (337 aa).

The Extracellular segment spans residues 1–38 (MRAVLLPGSGEQPAAFCYQVNGSCPRTVHPLAIRVLIY). N-linked (GlcNAc...) asparagine glycosylation occurs at N21. 2 disulfides stabilise this stretch: C24–C188 and C99–C192. The helical transmembrane segment at 39–59 (LACAVGMLITVLGNLFVVFAV) threads the bilayer. Topologically, residues 60 to 70 (SYFKVLHTPTN) are cytoplasmic. A helical transmembrane segment spans residues 71–91 (FLLLSLALADMLLGLLVLPLS). At 92-109 (TVRSVESCWFFGDFLCRL) the chain is on the extracellular side. A helical membrane pass occupies residues 110–130 (HTYLDTLFCLTSIFHLCFISI). The Cytoplasmic segment spans residues 131–154 (DRHCAICDPLLYPSKFTVRIALRY). The helical transmembrane segment at 155–175 (IAAGWGIPAAYTAFFLYTDVV) threads the bilayer. The interval 176-189 (ERALSQWLEEMPCV) is extracellular Loop 2 (ECL2). Residues 176-204 (ERALSQWLEEMPCVGSCQLLFNKFWGWLN) are Extracellular-facing. A helical membrane pass occupies residues 205 to 225 (FPAFFIPCLIMISLYLKIFVV). The Cytoplasmic segment spans residues 226–253 (ATRQAQQIRTLSQSLSGAVKRERKAAKT). A helical membrane pass occupies residues 254–274 (LGIAVGIYLVCWLPFTVDTLV). Residues 275-284 (DSLLNFVTPP) lie on the Extracellular side of the membrane. Residues 285 to 307 (LVFDIFIWFAYFNSACNPIIYVF) traverse the membrane as a helical segment. Over 308–337 (SYRWFRKALKLLLSREILSPRTQTADLFHD) the chain is Cytoplasmic.

The protein belongs to the G-protein coupled receptor 1 family.

Its subcellular location is the cell membrane. In terms of biological role, olfactory receptor specific for trimethylamine, a trace amine enriched in the urine of male rats, playing a role in social behavior. Also activated by N-methylpiperidine. Trimethylamine is present at high concentration in the urine of male after puberty and acts as an attractant. Trimethylamine-binding causes a conformation change that triggers signaling via G(s)-class of G alpha proteins (GNAL or GNAS). Also required to provide olfactory input into limbic brain areas to regulate emotional behaviors likely via modulation of the serotonin system. The protein is Trace amine-associated receptor 5 of Rattus norvegicus (Rat).